The sequence spans 419 residues: 26S proteasome regulatory subunit 8 homolog B (419 aa).

ATP is bound at residue 202–209; the sequence is GPPGTGKT. Lysine 406 participates in a covalent cross-link: Glycyl lysine isopeptide (Lys-Gly) (interchain with G-Cter in ubiquitin).

The protein belongs to the AAA ATPase family. In terms of assembly, component of the 19S regulatory particle (RP/PA700) base subcomplex of the 26S proteasome. The 26S proteasome is composed of a core protease (CP), known as the 20S proteasome, capped at one or both ends by the 19S regulatory particle (RP/PA700). The RP/PA700 complex is composed of at least 17 different subunits in two subcomplexes, the base and the lid, which form the portions proximal and distal to the 20S proteolytic core, respectively.

Its subcellular location is the cytoplasm. The protein localises to the nucleus. Its function is as follows. The 26S proteasome is involved in the ATP-dependent degradation of ubiquitinated proteins. The regulatory (or ATPase) complex confers ATP dependency and substrate specificity to the 26S complex. In Arabidopsis thaliana (Mouse-ear cress), this protein is 26S proteasome regulatory subunit 8 homolog B (RPT6B).